Reading from the N-terminus, the 147-residue chain is Lysozyme C-3 (147 aa).

Residues Met-1–Gly-18 form the signal peptide. A C-type lysozyme domain is found at Lys-19–Leu-147. 4 cysteine pairs are disulfide-bonded: Cys-24/Cys-145, Cys-48/Cys-133, Cys-83/Cys-99, and Cys-95/Cys-113. Catalysis depends on residues Glu-53 and Asp-71.

This sequence belongs to the glycosyl hydrolase 22 family. As to quaternary structure, monomer. As to expression, stomach-specific.

It carries out the reaction Hydrolysis of (1-&gt;4)-beta-linkages between N-acetylmuramic acid and N-acetyl-D-glucosamine residues in a peptidoglycan and between N-acetyl-D-glucosamine residues in chitodextrins.. Functionally, lysozymes have primarily a bacteriolytic function; those in tissues and body fluids are associated with the monocyte-macrophage system and enhance the activity of immunoagents. The sequence is that of Lysozyme C-3 (LYZ3) from Bos taurus (Bovine).